Consider the following 139-residue polypeptide: Flagellar basal body rod protein FlgB (139 aa).

Belongs to the flagella basal body rod proteins family. The basal body constitutes a major portion of the flagellar organelle and consists of a number of rings mounted on a central rod. In Gram-negative bacteria, at least four rings, L, P, S and M are present, whereas Gram-positive bacteria lack the L and P rings. The rod consists of about 26 subunits of FlgG in the distal portion, and FlgB, FlgC and FlgF build up the proximal portion of the rod with about 6 subunits each. Rod assembly occurs by export via the flagellum-specific pathway of its constituent proteins and by their incorporation into the rod structure in the probable order of FlgB, FlgC, FlgF and FlgG. Another protein, FliE, also assembles onto the stable rod structure.

It localises to the bacterial flagellum basal body. Functionally, structural component of flagellum, the bacterial motility apparatus. Part of the rod structure of flagellar basal body. The polypeptide is Flagellar basal body rod protein FlgB (Proteus mirabilis).